We begin with the raw amino-acid sequence, 1026 residues long: MSSFDIFSPTTSVSGKFFLEASAGTGKTFTIEQVILRSLLEGNVEQTKNILVVTFTNAATNELKLRIQESLKQALTLFSQALSHPETPLPPYVSSQETKVKQLYXKXRNSLATLDEMNIFTIHGLCRFTLEQHFPWVQPIHPSSMFSEPQTIQQYILDYLRQNSWENVLSPKQYAFLSYHHRATTQQTRHLADRLLQDYASTPNLALPPLSITLQKVKNWSSQYKHLSPLSLEELQDFSLRFKQSDLPIDRELPDFVKQFETDPNSLDILFFPGMVQKFQEENRNKKKLGPPFSPLDPFLKDWLLIAQPFCQKEPIFHTLLKSVQQHLKTYCAQSYSHDESIATLESLLAQNDHVVSQLRKQFQLVLIDEFQDTDKRQWKIFSKLFASPDYSGSLFLIGDPKQSIYEWRNADLPTYLQAKNSFPKESQLILDTNYRSTPQLMQALNHLFSLPSPFLETPQTILYHPLQSKGSASTSYSEFRPIHFFTTQDSQEEALWISKTASYLRSTFAIPFGNMAVLVQDYPQALKLITHSTIPMAYCKEKRIFDRTESPYLLILLLEALLYPENQQKIQAILLSRFFHLSATDIHQHLKIFSSLFFMLNTYLHQYSLLATFYKLMGETVFSQTIGETLLQTPLGDIIFQELEELCLYLDKTTENPHHKLFHLINILDTGKYDEELSFSSQSNDDNVLKITTVHSSKGLEYDVVFCSSLNKVKEKSPSVHMREMYVACTRAKKFLFIPFSSIEKRLQSNKKVSALANYANITQHDNIPHLVETLTASHPEFFSSGTQPPESNISIFSEPLPEQEFFSLPILSSQPIYSFSSTTESQYFTEPFQEISSSSLFPGGSLTGTLIHKLLESLSGNFNASLEEITHKAQTLLKNTILEGFESIISEKIYTAFSTKLPFVSGSFALKDVHPYNIRVEETFLLQENGELWQGIVDLFFEHNNRFFIIDWKTSFLGDEPSLYSPDKLLLYIQRQGLDKQGVLYKRAAKKFLHQFNSSLQIEMAFVFIRGIDDKGNGFLQPSP.

Residues 1–438 form the UvrD-like helicase ATP-binding domain; that stretch reads MSSFDIFSPT…LILDTNYRST (438 aa). The segment at 1-766 is DNA-binding and helicase activity, interacts with RecC; it reads MSSFDIFSPT…LANYANITQH (766 aa). 21 to 28 contacts ATP; it reads ASAGTGKT. Residues 452 to 700 form the UvrD-like helicase C-terminal domain; it reads PSPFLETPQT…KITTVHSSKG (249 aa). The interval 815–1026 is nuclease activity, interacts with RecD and RecA; it reads SQPIYSFSST…KGNGFLQPSP (212 aa). Mg(2+) contacts are provided by H854, D940, and D953. D953 serves as the catalytic For nuclease activity.

Belongs to the helicase family. UvrD subfamily. Heterotrimer of RecB, RecC and RecD. All subunits contribute to DNA-binding. Interacts with RecA. The cofactor is Mg(2+).

The enzyme catalyses Exonucleolytic cleavage (in the presence of ATP) in either 5'- to 3'- or 3'- to 5'-direction to yield 5'-phosphooligonucleotides.. It carries out the reaction Couples ATP hydrolysis with the unwinding of duplex DNA by translocating in the 3'-5' direction.. It catalyses the reaction ATP + H2O = ADP + phosphate + H(+). In terms of biological role, a helicase/nuclease that prepares dsDNA breaks (DSB) for recombinational DNA repair. Binds to DSBs and unwinds DNA via a highly rapid and processive ATP-dependent bidirectional helicase activity. Unwinds dsDNA until it encounters a Chi (crossover hotspot instigator) sequence from the 3' direction. Cuts ssDNA a few nucleotides 3' to the Chi site. The properties and activities of the enzyme are changed at Chi. The Chi-altered holoenzyme produces a long 3'-ssDNA overhang and facilitates RecA-binding to the ssDNA for homologous DNA recombination and repair. Holoenzyme degrades any linearized DNA that is unable to undergo homologous recombination. In the holoenzyme this subunit contributes ATPase, 3'-5' helicase, exonuclease activity and loads RecA onto ssDNA. The sequence is that of RecBCD enzyme subunit RecB from Chlamydia muridarum (strain MoPn / Nigg).